We begin with the raw amino-acid sequence, 605 residues long: Dolichyl-diphosphooligosaccharide--protein glycosyltransferase subunit 1 (605 aa).

Residues 1-22 (MEAPIVLLLLLWLALAPTPGSA) form the signal peptide. Residues 23–437 (SSEAPPLVNE…FNKVLMLQEP (415 aa)) lie on the Lumenal side of the membrane. K185 is modified (N6-acetyllysine). Residue N297 is glycosylated (N-linked (GlcNAc...) asparagine). The helical transmembrane segment at 438–455 (LLVVAAFYILFFTVIIYV) threads the bilayer. Residues 456 to 605 (RLDFSITKDP…TKIDHILDAL (150 aa)) are Cytoplasmic-facing. At K536 the chain carries N6-acetyllysine; alternate. A Glycyl lysine isopeptide (Lys-Gly) (interchain with G-Cter in SUMO2); alternate cross-link involves residue K536.

Belongs to the OST1 family. Component of the oligosaccharyltransferase (OST) complex. OST exists in two different complex forms which contain common core subunits RPN1, RPN2, OST48, OST4, DAD1 and TMEM258, either STT3A or STT3B as catalytic subunits, and form-specific accessory subunits. STT3A complex assembly occurs through the formation of 3 subcomplexes. Subcomplex 1 contains RPN1 and TMEM258, subcomplex 2 contains the STT3A-specific subunits STT3A, DC2/OSTC, and KCP2 as well as the core subunit OST4, and subcomplex 3 contains RPN2, DAD1, and OST48. The STT3A complex can form stable complexes with the Sec61 complex or with both the Sec61 and TRAP complexes. Interacts with TMEM35A/NACHO. In terms of processing, ubiquitinated by the ECS(ASB11) complex. Post-translationally, ufmylated by UFL1 in response to endoplasmic reticulum stress, promoting reticulophagy of endoplasmic reticulum sheets. As to expression, expressed in all tissues tested.

It is found in the endoplasmic reticulum membrane. It functions in the pathway protein modification; protein glycosylation. In terms of biological role, subunit of the oligosaccharyl transferase (OST) complex that catalyzes the initial transfer of a defined glycan (Glc(3)Man(9)GlcNAc(2) in eukaryotes) from the lipid carrier dolichol-pyrophosphate to an asparagine residue within an Asn-X-Ser/Thr consensus motif in nascent polypeptide chains, the first step in protein N-glycosylation. N-glycosylation occurs cotranslationally and the complex associates with the Sec61 complex at the channel-forming translocon complex that mediates protein translocation across the endoplasmic reticulum (ER). All subunits are required for a maximal enzyme activity. The polypeptide is Dolichyl-diphosphooligosaccharide--protein glycosyltransferase subunit 1 (Rattus norvegicus (Rat)).